The primary structure comprises 143 residues: Nucleoside diphosphate kinase (143 aa).

The ATP site is built by lysine 11, phenylalanine 59, arginine 87, threonine 93, arginine 104, and asparagine 114. The active-site Pros-phosphohistidine intermediate is histidine 117.

The protein belongs to the NDK family. As to quaternary structure, homotetramer. The cofactor is Mg(2+).

It localises to the cytoplasm. The enzyme catalyses a 2'-deoxyribonucleoside 5'-diphosphate + ATP = a 2'-deoxyribonucleoside 5'-triphosphate + ADP. It catalyses the reaction a ribonucleoside 5'-diphosphate + ATP = a ribonucleoside 5'-triphosphate + ADP. Functionally, major role in the synthesis of nucleoside triphosphates other than ATP. The ATP gamma phosphate is transferred to the NDP beta phosphate via a ping-pong mechanism, using a phosphorylated active-site intermediate. The polypeptide is Nucleoside diphosphate kinase (Idiomarina loihiensis (strain ATCC BAA-735 / DSM 15497 / L2-TR)).